The sequence spans 151 residues: Small ribosomal subunit protein uS15 (151 aa).

The protein belongs to the universal ribosomal protein uS15 family. In terms of assembly, component of the small ribosomal subunit.

Its subcellular location is the cytoplasm. Component of the small ribosomal subunit. The ribosome is a large ribonucleoprotein complex responsible for the synthesis of proteins in the cell. The protein is Small ribosomal subunit protein uS15 (rps13) of Xenopus laevis (African clawed frog).